The primary structure comprises 89 residues: Submaxillary mucin (89 aa).

The segment at 1–89 (AGSVGRTAGG…VGGSPVATTL (89 aa)) is disordered. Ser3 carries an O-linked (GalNAc...) serine; partial glycan. Residues Thr7 and Thr14 are each glycosylated (O-linked (GalNAc...) threonine; partial). O-linked (GalNAc...) serine; partial glycosylation is present at Ser15. The O-linked (GalNAc...) threonine; partial glycan is linked to Thr23. The O-linked (GalNAc...) serine; partial glycan is linked to Ser25. Thr27 is a glycosylation site (O-linked (GalNAc...) threonine; partial). The O-linked (GalNAc...) serine; partial glycan is linked to Ser29. An O-linked (GalNAc...) threonine; partial glycan is attached at Thr34. An O-linked (GalNAc...) serine; partial glycan is attached at Ser38. Thr42 carries an O-linked (GalNAc...) threonine; partial glycan. O-linked (GalNAc...) serine; partial glycans are attached at residues Ser47 and Ser49. Thr50 is a glycosylation site (O-linked (GalNAc...) threonine; partial). Ser54 carries an O-linked (GalNAc...) serine; partial glycan. Residues 56–71 (APGTTLAGRAGTTLGP) show a composition bias toward low complexity. O-linked (GalNAc...) threonine; partial glycosylation is found at Thr59, Thr60, Thr67, and Thr68. 2 O-linked (GalNAc...) serine; partial glycosylation sites follow: Ser73 and Ser76. An O-linked (GalNAc...) threonine; partial glycan is attached at Thr78. Ser83 carries O-linked (GalNAc...) serine; partial glycosylation.

Heavily O-glycosylated at most but not all Ser and Thr residues. In terms of tissue distribution, expressed in the submaxillary salivary gland.

Its subcellular location is the secreted. This is Submaxillary mucin from Canis lupus familiaris (Dog).